The primary structure comprises 323 residues: tRNA U34 carboxymethyltransferase (323 aa).

Carboxy-S-adenosyl-L-methionine contacts are provided by residues lysine 91, tryptophan 105, lysine 110, glycine 130, isoleucine 180–glutamate 181, methionine 196, tyrosine 200, and arginine 315.

It belongs to the class I-like SAM-binding methyltransferase superfamily. CmoB family. In terms of assembly, homotetramer.

It catalyses the reaction carboxy-S-adenosyl-L-methionine + 5-hydroxyuridine(34) in tRNA = 5-carboxymethoxyuridine(34) in tRNA + S-adenosyl-L-homocysteine + H(+). Functionally, catalyzes carboxymethyl transfer from carboxy-S-adenosyl-L-methionine (Cx-SAM) to 5-hydroxyuridine (ho5U) to form 5-carboxymethoxyuridine (cmo5U) at position 34 in tRNAs. The sequence is that of tRNA U34 carboxymethyltransferase from Geobacter sp. (strain M21).